A 307-amino-acid polypeptide reads, in one-letter code: Ribosomal RNA small subunit methyltransferase H (307 aa).

Residues 38 to 40, Asp-58, Phe-82, Asp-99, and Gln-106 contribute to the S-adenosyl-L-methionine site; that span reads GGH.

The protein belongs to the methyltransferase superfamily. RsmH family.

The protein localises to the cytoplasm. It carries out the reaction cytidine(1402) in 16S rRNA + S-adenosyl-L-methionine = N(4)-methylcytidine(1402) in 16S rRNA + S-adenosyl-L-homocysteine + H(+). In terms of biological role, specifically methylates the N4 position of cytidine in position 1402 (C1402) of 16S rRNA. The polypeptide is Ribosomal RNA small subunit methyltransferase H (Variovorax paradoxus (strain S110)).